The chain runs to 139 residues: Trafficking protein particle complex subunit 2-like protein (139 aa).

The protein belongs to the TRAPP small subunits family. Sedlin subfamily. In terms of assembly, component of the multisubunit TRAPP (transport protein particle) complex, which includes at least TRAPPC2, TRAPPC2L, TRAPPC3, TRAPPC3L, TRAPPC4, TRAPPC5, TRAPPC8, TRAPPC9, TRAPPC10, TRAPPC11 and TRAPPC12. Interacts with the heterodimer TRAPPC3-TRAPPC6A.

It is found in the cytoplasm. It localises to the perinuclear region. The protein localises to the endoplasmic reticulum. Its subcellular location is the golgi apparatus. Its function is as follows. May play a role in vesicular transport from endoplasmic reticulum to Golgi. The protein is Trafficking protein particle complex subunit 2-like protein (Trappc2l) of Mus musculus (Mouse).